Here is a 96-residue protein sequence, read N- to C-terminus: Glutamyl-tRNA(Gln) amidotransferase subunit C (96 aa).

This sequence belongs to the GatC family. As to quaternary structure, heterotrimer of A, B and C subunits.

The catalysed reaction is L-glutamyl-tRNA(Gln) + L-glutamine + ATP + H2O = L-glutaminyl-tRNA(Gln) + L-glutamate + ADP + phosphate + H(+). The enzyme catalyses L-aspartyl-tRNA(Asn) + L-glutamine + ATP + H2O = L-asparaginyl-tRNA(Asn) + L-glutamate + ADP + phosphate + 2 H(+). Allows the formation of correctly charged Asn-tRNA(Asn) or Gln-tRNA(Gln) through the transamidation of misacylated Asp-tRNA(Asn) or Glu-tRNA(Gln) in organisms which lack either or both of asparaginyl-tRNA or glutaminyl-tRNA synthetases. The reaction takes place in the presence of glutamine and ATP through an activated phospho-Asp-tRNA(Asn) or phospho-Glu-tRNA(Gln). In Neisseria meningitidis serogroup A / serotype 4A (strain DSM 15465 / Z2491), this protein is Glutamyl-tRNA(Gln) amidotransferase subunit C.